The primary structure comprises 167 residues: UPF0303 protein mlr5144 (167 aa).

The protein belongs to the UPF0303 family.

The protein is UPF0303 protein mlr5144 of Mesorhizobium japonicum (strain LMG 29417 / CECT 9101 / MAFF 303099) (Mesorhizobium loti (strain MAFF 303099)).